Reading from the N-terminus, the 273-residue chain is Probable cysteine-rich repeat secretory protein 6 (273 aa).

The first 21 residues, 1 to 21, serve as a signal peptide directing secretion; sequence MTRIIDVSLFCFFLFSLGAMS. Gnk2-homologous domains are found at residues 22-122 and 128-241; these read QPSQ…DNSF and DSPA…ISAL.

The protein belongs to the cysteine-rich repeat secretory protein family.

The protein localises to the secreted. This is Probable cysteine-rich repeat secretory protein 6 (CRRSP6) from Arabidopsis thaliana (Mouse-ear cress).